We begin with the raw amino-acid sequence, 528 residues long: Calcium-dependent protein kinase 4 (528 aa).

Residues 1–36 are disordered; that stretch reads MGQEVSSVNNTKNEHHKTNKKSLKGGNERHEMKESS. Residue Gly2 is the site of N-myristoyl glycine attachment. Residues 14–23 show a composition bias toward basic residues; that stretch reads EHHKTNKKSL. A Protein kinase domain is found at 71–329; sequence KGIKILGKGS…RDALEHEWIK (259 aa). ATP contacts are provided by residues 76–84 and Lys99; that span reads LGKGSFGEV. Catalysis depends on Asp193, which acts as the Proton acceptor. The J domain autoinhibitory motif motif lies at 350–358; sequence NIRQFQSTQ. A j domain region spans residues 350-386; the sequence is NIRQFQSTQKLAQAALLYMGSKLTTIDETKELTKIFK. Positions 359–368 match the J domain EF-hand interaction motif motif; sequence KLAQAALLYM. EF-hand domains lie at 376 to 411, 427 to 458, 459 to 494, and 496 to 528; these read DETK…LLKL, EVDQ…RKLL, LSTE…SDVS, and ECWK…LCNY. Ca(2+) is bound by residues Asp389, Asn391, Asp393, Gln395, Glu400, Asp436, Asp438, Asn440, Tyr442, Glu447, Asp472, Asp474, Ser476, Lys478, Glu483, Asp506, Asn508, Asp510, Glu512, and Glu517.

It belongs to the protein kinase superfamily. Ser/Thr protein kinase family. CDPK subfamily. As to quaternary structure, may interact with the pre-replication MCM complex prior male gametogenesis activation. Requires Mg(2+) as cofactor. Post-translationally, myristoylated; myristoylation may target it to different subcellular compartments. During male gametogenesis, myristoylation is required to initiate DNA replication but not for mitotic spindle assembly or axoneme activation. Not palmitoylated. In terms of processing, may be autophosphorylated on Thr-234 in vitro.

It is found in the cytoplasm. The protein resides in the cell membrane. The catalysed reaction is L-seryl-[protein] + ATP = O-phospho-L-seryl-[protein] + ADP + H(+). The enzyme catalyses L-threonyl-[protein] + ATP = O-phospho-L-threonyl-[protein] + ADP + H(+). Its activity is regulated as follows. Activated by calcium. Upon calcium binding to the EF-hand domains, the C-terminus of the junction domain (J domain) undergoes a conformational change which results in the dissociation of the pseudo-substrate inhibitory motif from the catalytic domain. This, in turn, may facilitate the autophosphorylation of the activation loop at Thr-234, which leads to the kinase activation. Intracellular calcium increase is triggered by xanthurenic acid (XA), a small mosquito molecule that induces the differentiation of specialized transmission stages, the gametocytes, into male and female gametes. Activated by a decrease in temperature (20 degrees Celsius) and an increase in pH (7.6) occurring when the parasite is ingested by in the mosquito. In terms of biological role, calcium-dependent protein kinase which acts as a sensor and effector of intracellular Ca(2+) levels probably in part downstream of cGMP-activated PKG kinase. Plays a central role in the host erythrocytes and hepatocytes infection cycles, sexual reproduction and mosquito transmission of the parasite. During the liver stage, involved in sporozoite motility and thus in sporozoite invasion of host hepatocytes, probably together with CDPK1 and CDPK5. Involved in merosome egress from host hepatocytes, probably together with CDPK5. During the asexual blood stage, involved in merozoite invasion of host erythrocytes and motility by stabilizing the inner membrane complex, a structure below the plasma membrane which acts as an anchor for the glidosome, an acto-myosin motor. Required for cell cycle progression in the male gametocyte. During male gametogenesis in the mosquito gut, required to initiate the first round of DNA replication, probably by facilitating the assembly of the pre-replicative MCM complex, to assemble the first mitotic spindle and, at the end of gametogenesis, to initiate axoneme motility, cytokinesis and subsequent exflagellation. For each of these steps, may phosphorylate SOC1, SOC2 and SOC3, respectively. Together with CDPK1, regulates ookinete gliding in the mosquito host midgut. This is Calcium-dependent protein kinase 4 from Plasmodium falciparum (isolate 3D7).